The primary structure comprises 286 residues: Elongation factor Ts (286 aa).

Residues 82 to 85 (TDFV) form an involved in Mg(2+) ion dislocation from EF-Tu region.

Belongs to the EF-Ts family.

It is found in the cytoplasm. Functionally, associates with the EF-Tu.GDP complex and induces the exchange of GDP to GTP. It remains bound to the aminoacyl-tRNA.EF-Tu.GTP complex up to the GTP hydrolysis stage on the ribosome. In Hamiltonella defensa subsp. Acyrthosiphon pisum (strain 5AT), this protein is Elongation factor Ts.